The chain runs to 484 residues: Tribbles (484 aa).

Residues 1 to 23 (MDNSSGQNSRTASSASTSKIVNY) are compositionally biased toward polar residues. The disordered stretch occupies residues 1 to 51 (MDNSSGQNSRTASSASTSKIVNYSSPVSPGVAAATSSSSSSSSSGMSSSQE). Residues 24 to 49 (SSPVSPGVAAATSSSSSSSSSGMSSS) show a composition bias toward low complexity. A Protein kinase domain is found at 129–397 (YRHLVDLTAS…ASHIFLTPWL (269 aa)). 2 stretches are compositionally biased toward acidic residues: residues 420 to 437 (AEED…DEEG) and 475 to 484 (PEPDTDVDMG). Disordered stretches follow at residues 420–443 (AEED…PLGD) and 464–484 (MAQN…VDMG).

The protein belongs to the protein kinase superfamily. CAMK Ser/Thr protein kinase family. Tribbles subfamily. Interacts with slbo. Interacts with Akt1. Expressed throughout the brain with highest levels of expression detected in the cell body rind and lower levels of expression detected in the neurophil (at protein level).

The protein resides in the nucleus. It is found in the cytoplasm. Its subcellular location is the cell cortex. Adapter protein that negatively regulates different signaling pathways to coordinate cell differentiation, proliferation, migration and growth. Functions by binding to key regulatory proteins and either blocks their activity or regulates their turnover by the proteasome. In various developing tissues functions as a cell cycle regulator that mediates cell proliferation according to the requirements of the developmental program. Acts by inducing the proteasomal degradation of the CD25 mitotic activators stg and twe at critical stages of development to delay entry into mitosis and thus mediate cell proliferation. During gastrulation, negatively regulates stg to delay mitosis in the ventral region of the embryonic mesoderm thus allowing invagination to be completed before cell division takes place. Delaying stg-dependent mitosis during bristle development and in migrating germline pole cells also arrests their cell divisions, whereas in cystocytes it promotes their cell divisions. Involved in the regulation of the mid-blastula transition; promotes the destruction of twe resulting in the cell cycle arrest in G2 of cycle 14 which delays mitosis and thus reduces cell proliferation allowing cell fate specification and morphogenesis to take place. In germline cells, blocks border cell migration during oogenesis by binding to slbo/C/EBP and promoting its ubiquitination and degradation by the proteasome. May function in a negative feedback loop with slbo to coordinate proper border cell migration. During tissue growth negatively regulates insulin signaling by binding to Akt1 and blocking its phosphorylation-dependent activation. However it may also function downstream in the insulin signaling pathway, acting with Akt1 to direct foxo degradation. Essential for the proper formation of operant place and aversive olfactory memories. The chain is Tribbles from Drosophila melanogaster (Fruit fly).